A 361-amino-acid chain; its full sequence is Isocitrate dehydrogenase [NAD] subunit 1, mitochondrial (361 aa).

The transit peptide at 1–12 directs the protein to the mitochondrion; that stretch reads MLRQGIAAQKKS. Arg-110, Arg-141, and Asp-229 together coordinate substrate. Asp-229 is a binding site for Mg(2+).

The protein belongs to the isocitrate and isopropylmalate dehydrogenases family. Octamer of two non-identical subunits IDH1 and IDH2. Mg(2+) serves as cofactor. It depends on Mn(2+) as a cofactor.

It is found in the mitochondrion. The enzyme catalyses D-threo-isocitrate + NAD(+) = 2-oxoglutarate + CO2 + NADH. Functionally, performs an essential role in the oxidative function of the citric acid cycle. The sequence is that of Isocitrate dehydrogenase [NAD] subunit 1, mitochondrial (IDH1) from Kluyveromyces lactis (strain ATCC 8585 / CBS 2359 / DSM 70799 / NBRC 1267 / NRRL Y-1140 / WM37) (Yeast).